We begin with the raw amino-acid sequence, 243 residues long: Protein-L-isoaspartate O-methyltransferase 2 (243 aa).

Residues 21-42 are disordered; it reads DACADRGHPSAERSTPETERRR. Residues 23–42 show a composition bias toward basic and acidic residues; that stretch reads CADRGHPSAERSTPETERRR. S94 is a catalytic residue.

The protein belongs to the methyltransferase superfamily. L-isoaspartyl/D-aspartyl protein methyltransferase family.

The protein resides in the cytoplasm. The enzyme catalyses [protein]-L-isoaspartate + S-adenosyl-L-methionine = [protein]-L-isoaspartate alpha-methyl ester + S-adenosyl-L-homocysteine. Its function is as follows. Catalyzes the methyl esterification of L-isoaspartyl residues in peptides and proteins that result from spontaneous decomposition of normal L-aspartyl and L-asparaginyl residues. It plays a role in the repair and/or degradation of damaged proteins. The chain is Protein-L-isoaspartate O-methyltransferase 2 from Anaeromyxobacter sp. (strain Fw109-5).